Reading from the N-terminus, the 1073-residue chain is Envelopment polyprotein (1073 aa).

The signal sequence occupies residues 1-19; the sequence is MMKVIWFSSLICFVIQCSG. Over 20–453 the chain is Lumenal; sequence DSGPIICAGP…NPQCYPAKKW (434 aa). An intrachain disulfide couples C26 to C49. Residues N33 and N63 are each glycosylated (N-linked (GlcNAc...) asparagine; by host). Intrachain disulfides connect C143–C156, C180–C327, C206–C216, C258–C305, C266–C303, C274–C280, C287–C292, C349–C352, C356–C424, and C376–C381. A helical membrane pass occupies residues 454–474; sequence LFIIIVILLGYAGLMLLTNVL. A golgi retention signal region spans residues 475-521; that stretch reads KAIGIWGSWVIAPVKLMFAIIKKLMRTVSCLMRKLMDRGRQVIHEEI. The Cytoplasmic portion of the chain corresponds to 475 to 535; that stretch reads KAIGIWGSWV…EGNQDDVRIE (61 aa). Positions 536–562 are internal signal sequence for glycoprotein C; it reads MARPRRVRHWMYSPVILTILAIGLAES. 10 disulfide bridges follow: C563-C604, C576-C586, C629-C725, C644-C841, C650-C698, C656-C705, C660-C687, C691-C696, C778-C793, and C809-C823. At 563 to 1036 the chain is on the lumenal side; it reads CDEMVHADSK…ALFGNGLSRW (474 aa). Residues 650–656 are fusion loop; sequence CRWAGDC. Positions 691-705 are fusion loop; sequence CGGAACGCFNAAPSC. 2 N-linked (GlcNAc...) asparagine; by host glycosylation sites follow: N853 and N914. Disulfide bonds link C908-C978, C918-C921, and C943-C974. A glycan (N-linked (GlcNAc...) asparagine; by host) is linked at N936. Residues 1037 to 1057 traverse the membrane as a helical segment; sequence ILGVIGVLLGGLALFFMIMSL. The Cytoplasmic portion of the chain corresponds to 1058–1073; sequence FKLGTKQVFRSRTKLA.

Belongs to the phlebovirus envelope glycoprotein family. In terms of assembly, homodimer. Heterodimer with glycoprotein C. Homotrimer (postfusion). As to quaternary structure, heterodimer with glycoprotein N. Post-translationally, specific enzymatic cleavages in vivo yield mature proteins including glycoprotein C and glycoprotein N. The cytoplasmic tail is Palmitoylated. In terms of processing, glycosylated. Post-translationally, palmitoylated.

The protein resides in the virion membrane. It is found in the host Golgi apparatus membrane. It localises to the host endoplasmic reticulum membrane. Its function is as follows. Structural component of the virion that interacts with glycoprotein C. It shields the hydrophobic fusion loops of the glycoprotein C, preventing premature fusion. The glycoprotein protrusions are arranged on an icosahedral lattice, with T=12 triangulation. They are able to attach the virion to the host cell receptor CD209/DC-SIGN and to promote fusion of membranes with the late endosome after clathrin-mediated endocytosis of the virion. Plays a role in the packaging of ribonucleoproteins during virus assembly. Structural component of the virion that interacts with glycoprotein N. Acts as a class II fusion protein that is activated upon acidification and subsequent repositioning of the glycoprotein N. The glycoprotein protrusions are arranged on an icosahedral lattice, with T=12 triangulation. They are able to attach the virion to the host cell receptor CD209/DC-SIGN and to promote fusion of membranes with the late endosome after clathrin-mediated endocytosis of the virion. This Dabie bandavirus (Severe fever with thrombocytopenia virus) protein is Envelopment polyprotein.